The primary structure comprises 389 residues: MSVIKMTDLDLAGKRVFIRADLNVPVKEGKVTSDARIKATIPTLKLALEKGAKVMVTSHLGRPTEGEFKPEDSLQPVVDYLKGAGFNVRLAQDYLNGVEVNEGEIVVLENVRVNKGEKKNDPELSKKYAALCDVFVMDAFGTAHRAQASTYGVAEFAPVACAGPLLAAELEALGKALKEPQRPMLAIVGGSKVSTKLTVLDSLSKIADQLIVGGGIANTFIAAEGHNVGKSLYEADLIPEAQRLSKVTNIPVPVDVRVGTEFSETALSTEKSVADVSGEESIFDIGDKSAEQLADIIRNAKTILWNGPVGVFEFPNFRKGTEIVSNAIAEATANGAFSIAGGGDTLAAIDLFGIKDKISYISTGGGAFLEFVEGKVLPAVEILEKRANG.

Residues 21–23 (DLN), Arg36, 59–62 (HLGR), Arg112, and Arg145 contribute to the substrate site. ATP-binding positions include Lys196, Glu313, and 342–345 (GGDT).

Belongs to the phosphoglycerate kinase family. As to quaternary structure, monomer.

The protein resides in the cytoplasm. The catalysed reaction is (2R)-3-phosphoglycerate + ATP = (2R)-3-phospho-glyceroyl phosphate + ADP. The protein operates within carbohydrate degradation; glycolysis; pyruvate from D-glyceraldehyde 3-phosphate: step 2/5. The sequence is that of Phosphoglycerate kinase from Histophilus somni (strain 2336) (Haemophilus somnus).